A 604-amino-acid chain; its full sequence is Protein glass (604 aa).

4 disordered regions span residues 111–139, 199–237, 359–400, and 414–434; these read ISTT…HGYW, NSHN…GGNN, LPPL…SPTS, and EDEE…GGEM. 2 stretches are compositionally biased toward low complexity: residues 117–126 and 200–237; these read ASSGNGSSNN and SHNH…GGNN. The segment covering 414–427 has biased composition (acidic residues); it reads EDEEDSNEDLDGDE. C2H2-type zinc fingers lie at residues 437-459, 465-487, 493-515, 521-543, and 549-571; these read NLCR…LRTH, YRCP…VRTH, FRCP…MRTH, YRCS…LRIH, and YQCK…MRVH. The tract at residues 566–604 is disordered; it reads RHMRVHGNNNSSNGSNGATGVGGESSTGSGVGGGNSLLT. A compositionally biased stretch (low complexity) spans 572–581; that stretch reads GNNNSSNGSN. Gly residues predominate over residues 582–604; that stretch reads GATGVGGESSTGSGVGGGNSLLT.

It localises to the nucleus. In terms of biological role, transcription factor required for gene expression specific to photoreceptor cells. In Drosophila melanogaster (Fruit fly), this protein is Protein glass (gl).